Consider the following 814-residue polypeptide: Acyl-coenzyme A dehydrogenase (814 aa).

Glu497 acts as the Proton acceptor in catalysis.

It belongs to the acyl-CoA dehydrogenase family. It depends on FAD as a cofactor.

It catalyses the reaction a medium-chain 2,3-saturated fatty acyl-CoA + oxidized [electron-transfer flavoprotein] + H(+) = a medium-chain (2E)-enoyl-CoA + reduced [electron-transfer flavoprotein]. It carries out the reaction a long-chain 2,3-saturated fatty acyl-CoA + oxidized [electron-transfer flavoprotein] + H(+) = a long-chain (2E)-enoyl-CoA + reduced [electron-transfer flavoprotein]. Its pathway is lipid metabolism; fatty acid beta-oxidation. Its function is as follows. Catalyzes the dehydrogenation of acyl-coenzymes A (acyl-CoAs) to 2-enoyl-CoAs, the first step of the beta-oxidation cycle of fatty acid degradation. Is required for E.coli to utilize dodecanoate or oleate as the sole carbon and energy source for growth. The polypeptide is Acyl-coenzyme A dehydrogenase (Escherichia coli (strain K12)).